The following is a 129-amino-acid chain: MKILVALAVFFLVSTQLFAEEIGANDDLNYWSDWYDSDQIKEELPEPFEHLLQRIARRPKPQQFFGLMGKRDADSSIEKQVALLKALYGHGQISHKRHKTDSFVGLMGKRALNSVAYERSAMQNYERRR.

An N-terminal signal peptide occupies residues 1-19 (MKILVALAVFFLVSTQLFA). The propeptide occupies 20-56 (EEIGANDDLNYWSDWYDSDQIKEELPEPFEHLLQRIA). Methionine amide occurs at positions 68 and 107.

The protein belongs to the tachykinin family. The substance P form is cleaved at Pro-59 by the prolyl endopeptidase FAP (seprase) activity (in vitro). Substance P is also cleaved and degraded by Angiotensin-converting enzyme (ACE) and neprilysin (MME).

The protein localises to the secreted. Tachykinins are active peptides which excite neurons, evoke behavioral responses, are potent vasodilators and secretagogues, and contract (directly or indirectly) many smooth muscles. This is Protachykinin-1 (TAC1) from Homo sapiens (Human).